The sequence spans 353 residues: UPF0658 Golgi apparatus membrane protein C23H3.04 (353 aa).

Transmembrane regions (helical) follow at residues 39–59 (IFFL…EGYC), 76–96 (SLPI…YLCV), 103–123 (NIIE…YSIV), 172–192 (PFLI…GFLA), 226–246 (LLKI…MVLP), 249–269 (AVVE…ILTL), 281–301 (LMMT…FKII), and 318–338 (MITT…AIGF).

Belongs to the UPF0658 family.

The protein localises to the golgi apparatus membrane. The sequence is that of UPF0658 Golgi apparatus membrane protein C23H3.04 from Schizosaccharomyces pombe (strain 972 / ATCC 24843) (Fission yeast).